We begin with the raw amino-acid sequence, 104 residues long: Transcription initiation factor IIA subunit 2 (104 aa).

Belongs to the TFIIA subunit 2 family. As to quaternary structure, TFIIA is a heterodimer of the large unprocessed subunit 1 and a small subunit gamma.

The protein resides in the nucleus. In terms of biological role, TFIIA is a component of the transcription machinery of RNA polymerase II and plays an important role in transcriptional activation. TFIIA in a complex with TBP mediates transcriptional activity. The chain is Transcription initiation factor IIA subunit 2 from Schistosoma mansoni (Blood fluke).